A 445-amino-acid polypeptide reads, in one-letter code: Argininosuccinate synthase (445 aa).

Residues 17 to 25 and Ala-43 each bind ATP; that span reads AFSGGLDTS. Position 99 (Tyr-99) interacts with L-citrulline. Residues Gly-129 and Thr-131 each coordinate ATP. Positions 131, 135, and 136 each coordinate L-aspartate. Asn-135 contributes to the L-citrulline binding site. ATP is bound at residue Asp-136. L-citrulline-binding residues include Arg-139 and Ser-192. Asp-194 provides a ligand contact to ATP. Residues Thr-201, Glu-203, and Glu-280 each coordinate L-citrulline.

It belongs to the argininosuccinate synthase family. Type 2 subfamily. As to quaternary structure, homotetramer.

The protein resides in the cytoplasm. It carries out the reaction L-citrulline + L-aspartate + ATP = 2-(N(omega)-L-arginino)succinate + AMP + diphosphate + H(+). It functions in the pathway amino-acid biosynthesis; L-arginine biosynthesis; L-arginine from L-ornithine and carbamoyl phosphate: step 2/3. The protein is Argininosuccinate synthase of Burkholderia cenocepacia (strain ATCC BAA-245 / DSM 16553 / LMG 16656 / NCTC 13227 / J2315 / CF5610) (Burkholderia cepacia (strain J2315)).